Consider the following 143-residue polypeptide: Large ribosomal subunit protein uL15 (143 aa).

Residues 1–57 (MQLNNLKPAAGSKHAKRRVGRGIGSGLGKTAGRGHKGQKSRSGGFHKVGFEGGQMPL) form a disordered region. The segment covering 21 to 31 (RGIGSGLGKTA) has biased composition (gly residues).

This sequence belongs to the universal ribosomal protein uL15 family. As to quaternary structure, part of the 50S ribosomal subunit.

Its function is as follows. Binds to the 23S rRNA. This is Large ribosomal subunit protein uL15 from Ralstonia pickettii (strain 12J).